Here is a 184-residue protein sequence, read N- to C-terminus: GMP synthase [glutamine-hydrolyzing] subunit A (184 aa).

The 182-residue stretch at 3-184 (HIAVIDNHGQ…VFKNFIARCQ (182 aa)) folds into the Glutamine amidotransferase type-1 domain. Cys-75 (nucleophile) is an active-site residue. Residues His-163 and Glu-165 contribute to the active site.

In terms of assembly, heterodimer composed of a glutamine amidotransferase subunit (A) and a GMP-binding subunit (B).

The catalysed reaction is XMP + L-glutamine + ATP + H2O = GMP + L-glutamate + AMP + diphosphate + 2 H(+). It functions in the pathway purine metabolism; GMP biosynthesis; GMP from XMP (L-Gln route): step 1/1. In terms of biological role, catalyzes the synthesis of GMP from XMP. The polypeptide is GMP synthase [glutamine-hydrolyzing] subunit A (Haloquadratum walsbyi (strain DSM 16790 / HBSQ001)).